The primary structure comprises 325 residues: Mitochondrial thiamine pyrophosphate carrier 1 (325 aa).

Solcar repeat units lie at residues 12–111, 122–209, and 216–312; these read GSRL…TTLL, PPSA…LRPH, and PFSS…ALKF. 6 consecutive transmembrane segments (helical) span residues 17 to 35, 92 to 108, 127 to 143, 184 to 200, 223 to 239, and 287 to 304; these read VTAAGATAGLVARFVIAPL, LLYVCYSAIQFTTYRTT, SFVAGAIGGGTATAATY, VWDRAWAQIIPYMSFFF, VARTMASVMAKSRTFPL, and GLTVSLLKAAPASAVTMW.

The protein belongs to the mitochondrial carrier (TC 2.A.29) family.

Its subcellular location is the mitochondrion inner membrane. Mitochondrial transporter that mediates uptake of thiamine pyrophosphate (ThPP) into mitochondria. This chain is Mitochondrial thiamine pyrophosphate carrier 1 (TPC1), found in Chaetomium globosum (strain ATCC 6205 / CBS 148.51 / DSM 1962 / NBRC 6347 / NRRL 1970) (Soil fungus).